The primary structure comprises 188 residues: NADH-quinone oxidoreductase subunit B (188 aa).

[4Fe-4S] cluster contacts are provided by Cys-67, Cys-68, Cys-132, and Cys-162.

The protein belongs to the complex I 20 kDa subunit family. In terms of assembly, NDH-1 is composed of 14 different subunits. Subunits NuoB, C, D, E, F, and G constitute the peripheral sector of the complex. It depends on [4Fe-4S] cluster as a cofactor.

Its subcellular location is the cell inner membrane. The enzyme catalyses a quinone + NADH + 5 H(+)(in) = a quinol + NAD(+) + 4 H(+)(out). NDH-1 shuttles electrons from NADH, via FMN and iron-sulfur (Fe-S) centers, to quinones in the respiratory chain. Couples the redox reaction to proton translocation (for every two electrons transferred, four hydrogen ions are translocated across the cytoplasmic membrane), and thus conserves the redox energy in a proton gradient. The polypeptide is NADH-quinone oxidoreductase subunit B (Maricaulis maris (strain MCS10) (Caulobacter maris)).